The primary structure comprises 530 residues: Cytochrome P450 monooxygenase ausG (530 aa).

A helical transmembrane segment spans residues 31–51 (LLVAYRLPGLLLLFSITIILF). Cys-470 serves as a coordination point for heme.

The protein belongs to the cytochrome P450 family. Requires heme as cofactor.

Its subcellular location is the membrane. It participates in secondary metabolite biosynthesis; terpenoid biosynthesis. In terms of biological role, cytochrome P450 monooxygenase; part of the gene cluster B that mediates the biosynthesis of the fungal meroterpenoid acetoxydehydroaustin. The first step of the pathway is the synthesis of 3,5-dimethylorsellinic acid by the polyketide synthase ausA. 3,5-dimethylorsellinic acid is then prenylated by the polyprenyl transferase ausN. Further epoxidation by the FAD-dependent monooxygenase ausM and cyclization by the probable terpene cyclase ausL lead to the formation of protoaustinoid A. Protoaustinoid A is then oxidized to spiro-lactone preaustinoid A3 by the combined action of the FAD-binding monooxygenases ausB and ausC, and the dioxygenase ausE. Acid-catalyzed keto-rearrangement and ring contraction of the tetraketide portion of preaustinoid A3 by ausJ lead to the formation of preaustinoid A4. The aldo-keto reductase ausK, with the help of ausH, is involved in the next step by transforming preaustinoid A4 into isoaustinone which is in turn hydroxylated by the P450 monooxygenase ausI to form austinolide. The cytochrome P450 monooxygenase ausG then modifies austinolide to austinol. Austinol is further acetylated to austin by the O-acetyltransferase ausP, which spontaneously changes to dehydroaustin. The cytochrome P450 monooxygenase then converts dehydroaustin is into 7-dehydrodehydroaustin. The hydroxylation catalyzed by ausR permits the second O-acetyltransferase ausQ to add an additional acetyl group to the molecule, leading to the formation of acetoxydehydroaustin. Due to genetic rearrangements of the clusters and the subsequent loss of some enzymes, the end product of the Penicillium brasilianum austinoid biosynthesis clusters is acetoxydehydroaustin. This Penicillium brasilianum protein is Cytochrome P450 monooxygenase ausG.